Here is a 307-residue protein sequence, read N- to C-terminus: Serine/threonine-protein phosphatase PP2A-2 catalytic subunit (307 aa).

Mn(2+) contacts are provided by D55, H57, D83, and N115. The active-site Proton donor is H116. Residues H165 and H239 each coordinate Mn(2+).

The protein belongs to the PPP phosphatase family. PP-2A subfamily. Mn(2+) is required as a cofactor.

Its subcellular location is the cytoplasm. The enzyme catalyses O-phospho-L-seryl-[protein] + H2O = L-seryl-[protein] + phosphate. It carries out the reaction O-phospho-L-threonyl-[protein] + H2O = L-threonyl-[protein] + phosphate. The protein is Serine/threonine-protein phosphatase PP2A-2 catalytic subunit (PP2A2) of Oryza sativa subsp. indica (Rice).